A 182-amino-acid polypeptide reads, in one-letter code: Large ribosomal subunit protein uL5 (182 aa).

The protein belongs to the universal ribosomal protein uL5 family. In terms of assembly, part of the 50S ribosomal subunit; part of the 5S rRNA/L5/L18/L25 subcomplex. Contacts the 5S rRNA and the P site tRNA. Forms a bridge to the 30S subunit in the 70S ribosome.

In terms of biological role, this is one of the proteins that bind and probably mediate the attachment of the 5S RNA into the large ribosomal subunit, where it forms part of the central protuberance. In the 70S ribosome it contacts protein S13 of the 30S subunit (bridge B1b), connecting the 2 subunits; this bridge is implicated in subunit movement. Contacts the P site tRNA; the 5S rRNA and some of its associated proteins might help stabilize positioning of ribosome-bound tRNAs. In Borrelia duttonii (strain Ly), this protein is Large ribosomal subunit protein uL5.